Here is a 400-residue protein sequence, read N- to C-terminus: MAAEIQPKPLTRKPILLQRMEGSQEVVNMAVIVPKEEGVISVSEDRTVRVWLKRDSGQYWPSVYHAMPSPCSCMSFNPETRRLSIGLDNGTISEFILSEDYNKMTPVKNYQAHQSRVTMILFVLELEWVLSTGQDKQFAWHCSESGQRLGGYRTSAVASGLQFDVETRHVFIGDHSGQVTILKLEQENCTLVTTFRGHTGGVTALCWDPVQRVLFSGSSDHSVIMWDIGGRKGTAIELQGHNDRVQALSYAQHTRQLISCGGDGGIVVWNMDVERQETPEWLDSDSCQKCDQPFFWNFKQMWDSKKIGLRQHHCRKCGKAVCGKCSSKRSSIPLMGFEFEVRVCDSCHEAITDEERAPTATFHDSKHNIVHVHFDATRGWLLTSGTDKVIKLWDMTPVVS.

WD repeat units lie at residues 22 to 61 (GSQEVVNMAVIVPKEEGVISVSEDRTVRVWLKRDSGQYWP), 66 to 105 (AMPSPCSCMSFNPETRRLSIGLDNGTISEFILSEDYNKMT), 112 to 150 (AHQSRVTMILFVLELEWVLSTGQDKQFAWHCSESGQRLG), 153 to 192 (RTSAVASGLQFDVETRHVFIGDHSGQVTILKLEQENCTLV), 197 to 236 (GHTGGVTALCWDPVQRVLFSGSSDHSVIMWDIGGRKGTAI), and 240 to 279 (GHNDRVQALSYAQHTRQLISCGGDGGIVVWNMDVERQETP). The segment at 281-352 (WLDSDSCQKC…VCDSCHEAIT (72 aa)) adopts an FYVE-type zinc-finger fold. Cysteine 287, cysteine 290, cysteine 314, cysteine 317, cysteine 322, cysteine 325, cysteine 344, and cysteine 347 together coordinate Zn(2+). A WD 7 repeat occupies 364 to 399 (DSKHNIVHVHFDATRGWLLTSGTDKVIKLWDMTPVV).

Homodimer. Interacts (via WD repeats 1-3) with AKT1, AKT2, PRKCZ and PRKCI. Interacts with VAMP2. Forms a complex with VAMP2 and PRKCZ. Interacts with FOXO1. Forms a complex with AKT1 and FOXO1.

It localises to the endosome. It is found in the early endosome. Its subcellular location is the cytoplasm. Its function is as follows. Acts in an adapter protein-like fashion to mediate the interaction between the kinase PRKCZ and its substrate VAMP2 and increases the PRKCZ-dependent phosphorylation of VAMP2. Positively regulates adipocyte differentiation, by facilitating the phosphorylation and thus inactivation of the anti-adipogenetic transcription factor FOXO1 by the kinase AKT1. Plays a role in endosomal control of AKT2 signaling; required for insulin-stimulated AKT2 phosphorylation and glucose uptake and insulin-stimulated phosphorylation of AKT2 substrates. Participates in transferrin receptor endocytosis. This Homo sapiens (Human) protein is WD repeat and FYVE domain-containing protein 2 (WDFY2).